A 306-amino-acid chain; its full sequence is Glutaminase (306 aa).

Positions 64, 115, 159, 166, 190, 242, and 260 each coordinate substrate.

Belongs to the glutaminase family. Homotetramer.

It carries out the reaction L-glutamine + H2O = L-glutamate + NH4(+). The protein is Glutaminase of Aeromonas salmonicida (strain A449).